Reading from the N-terminus, the 256-residue chain is Undecaprenyl-diphosphatase (256 aa).

The next 7 membrane-spanning stretches (helical) occupy residues M1–V21, F41–F61, V69–L89, L96–L116, V172–D192, A207–L227, and F233–L253.

This sequence belongs to the UppP family.

The protein resides in the cell inner membrane. It catalyses the reaction di-trans,octa-cis-undecaprenyl diphosphate + H2O = di-trans,octa-cis-undecaprenyl phosphate + phosphate + H(+). In terms of biological role, catalyzes the dephosphorylation of undecaprenyl diphosphate (UPP). Confers resistance to bacitracin. This is Undecaprenyl-diphosphatase from Wolinella succinogenes (strain ATCC 29543 / DSM 1740 / CCUG 13145 / JCM 31913 / LMG 7466 / NCTC 11488 / FDC 602W) (Vibrio succinogenes).